The following is a 126-amino-acid chain: Small ribosomal subunit protein uS13 (126 aa).

Residues 96-126 (PVRGQRTRTNARTRRGSRRTVAGKKKPAAKK) are disordered. The segment covering 100–126 (QRTRTNARTRRGSRRTVAGKKKPAAKK) has biased composition (basic residues).

It belongs to the universal ribosomal protein uS13 family. Part of the 30S ribosomal subunit. Forms a loose heterodimer with protein S19. Forms two bridges to the 50S subunit in the 70S ribosome.

Located at the top of the head of the 30S subunit, it contacts several helices of the 16S rRNA. In the 70S ribosome it contacts the 23S rRNA (bridge B1a) and protein L5 of the 50S subunit (bridge B1b), connecting the 2 subunits; these bridges are implicated in subunit movement. Contacts the tRNAs in the A and P-sites. The chain is Small ribosomal subunit protein uS13 from Thermosynechococcus vestitus (strain NIES-2133 / IAM M-273 / BP-1).